A 434-amino-acid chain; its full sequence is Glutamyl-tRNA reductase (434 aa).

Residues 49–52, S109, 114–116, and Q120 each bind substrate; these read TCNR and EPQ. C50 acts as the Nucleophile in catalysis. 189 to 194 serves as a coordination point for NADP(+); it reads GAGEMC.

Belongs to the glutamyl-tRNA reductase family. Homodimer.

It catalyses the reaction (S)-4-amino-5-oxopentanoate + tRNA(Glu) + NADP(+) = L-glutamyl-tRNA(Glu) + NADPH + H(+). Its pathway is porphyrin-containing compound metabolism; protoporphyrin-IX biosynthesis; 5-aminolevulinate from L-glutamyl-tRNA(Glu): step 1/2. Its function is as follows. Catalyzes the NADPH-dependent reduction of glutamyl-tRNA(Glu) to glutamate 1-semialdehyde (GSA). In Geobacter metallireducens (strain ATCC 53774 / DSM 7210 / GS-15), this protein is Glutamyl-tRNA reductase.